A 331-amino-acid chain; its full sequence is ESX-3 secretion system protein EccE3 (331 aa).

The next 2 membrane-spanning stretches (helical) occupy residues 11–31 (GRVT…PWQS) and 37–57 (LLGV…GLYF).

The protein belongs to the EccE family. In terms of assembly, part of the ESX-3 / type VII secretion system (T7SS), which is composed of cytosolic and membrane components. The ESX-3 membrane complex is composed of EccB3, EccC3, EccD3 and EccE3.

It localises to the cell inner membrane. Its function is as follows. Part of the ESX-3 specialized secretion system, which is important for iron and zinc uptake or homeostasis. This is ESX-3 secretion system protein EccE3 from Mycobacterium tuberculosis (strain ATCC 25618 / H37Rv).